The chain runs to 160 residues: Nucleotide-binding protein VFMJ11_1323 (160 aa).

The protein belongs to the YajQ family.

Nucleotide-binding protein. The polypeptide is Nucleotide-binding protein VFMJ11_1323 (Aliivibrio fischeri (strain MJ11) (Vibrio fischeri)).